We begin with the raw amino-acid sequence, 369 residues long: Chaperone protein DnaJ (369 aa).

Positions 3–67 (DHYEVLGVER…QQRQQYDRGG (65 aa)) constitute a J domain. Residues 123 to 205 (GAHRDLEVDT…CQGQGRVRAR (83 aa)) form a CR-type zinc finger. Residues Cys-136, Cys-139, Cys-153, Cys-156, Cys-179, Cys-182, Cys-193, and Cys-196 each contribute to the Zn(2+) site. 4 CXXCXGXG motif repeats span residues 136-143 (CETCDGSC), 153-160 (CDICHGTG), 179-186 (CGSCRGYG), and 193-200 (CVTCQGQG).

The protein belongs to the DnaJ family. As to quaternary structure, homodimer. Zn(2+) serves as cofactor.

Its subcellular location is the cytoplasm. Functionally, participates actively in the response to hyperosmotic and heat shock by preventing the aggregation of stress-denatured proteins and by disaggregating proteins, also in an autonomous, DnaK-independent fashion. Unfolded proteins bind initially to DnaJ; upon interaction with the DnaJ-bound protein, DnaK hydrolyzes its bound ATP, resulting in the formation of a stable complex. GrpE releases ADP from DnaK; ATP binding to DnaK triggers the release of the substrate protein, thus completing the reaction cycle. Several rounds of ATP-dependent interactions between DnaJ, DnaK and GrpE are required for fully efficient folding. Also involved, together with DnaK and GrpE, in the DNA replication of plasmids through activation of initiation proteins. The protein is Chaperone protein DnaJ of Leifsonia xyli subsp. xyli (strain CTCB07).